The sequence spans 332 residues: Glycerol-3-phosphate dehydrogenase [NAD(P)+] (332 aa).

NADPH contacts are provided by tryptophan 13, arginine 33, and lysine 105. Residues lysine 105, glycine 134, and serine 136 each contribute to the sn-glycerol 3-phosphate site. An NADPH-binding site is contributed by alanine 138. Sn-glycerol 3-phosphate-binding residues include lysine 189, aspartate 242, serine 252, arginine 253, and asparagine 254. Residue lysine 189 is the Proton acceptor of the active site. Arginine 253 serves as a coordination point for NADPH. Glutamate 279 contacts NADPH.

The protein belongs to the NAD-dependent glycerol-3-phosphate dehydrogenase family.

The protein localises to the cytoplasm. The catalysed reaction is sn-glycerol 3-phosphate + NAD(+) = dihydroxyacetone phosphate + NADH + H(+). It catalyses the reaction sn-glycerol 3-phosphate + NADP(+) = dihydroxyacetone phosphate + NADPH + H(+). Its pathway is membrane lipid metabolism; glycerophospholipid metabolism. Functionally, catalyzes the reduction of the glycolytic intermediate dihydroxyacetone phosphate (DHAP) to sn-glycerol 3-phosphate (G3P), the key precursor for phospholipid synthesis. This is Glycerol-3-phosphate dehydrogenase [NAD(P)+] from Halorhodospira halophila (strain DSM 244 / SL1) (Ectothiorhodospira halophila (strain DSM 244 / SL1)).